The primary structure comprises 123 residues: Small ribosomal subunit protein uS12 (123 aa).

Residues 1 to 22 (MATINQLVRQPRKRSVEKSDVP) form a disordered region. Asp-89 carries the 3-methylthioaspartic acid modification. A disordered region spans residues 100 to 123 (GSLDTSGVKGRNQGRSKYGTKRPK). Residues 111 to 123 (NQGRSKYGTKRPK) are compositionally biased toward basic residues.

This sequence belongs to the universal ribosomal protein uS12 family. Part of the 30S ribosomal subunit. Contacts proteins S8 and S17. May interact with IF1 in the 30S initiation complex.

Functionally, with S4 and S5 plays an important role in translational accuracy. Its function is as follows. Interacts with and stabilizes bases of the 16S rRNA that are involved in tRNA selection in the A site and with the mRNA backbone. Located at the interface of the 30S and 50S subunits, it traverses the body of the 30S subunit contacting proteins on the other side and probably holding the rRNA structure together. The combined cluster of proteins S8, S12 and S17 appears to hold together the shoulder and platform of the 30S subunit. The chain is Small ribosomal subunit protein uS12 from Pseudomonas entomophila (strain L48).